The sequence spans 270 residues: Undecaprenyl-diphosphatase 2 (270 aa).

8 helical membrane-spanning segments follow: residues 1-21, 39-59, 87-107, 114-134, 147-167, 190-210, 221-241, and 247-267; these read MDLIQIIVLAIVQGLTEFLPV, QGLAFDVAVHLGTLAAVVWYF, WAVILGTIPAGIAGLLFKGFI, PLVIAWATIGFGLLLWWSDVV, LSWKDILLIGCAQALALIPGT, FSFLLSIPIIVLASGLSTLDL, AMGLGVVLSAISAYLCIHFFL, and VGMLPFVIYRLILGAVLLVLF.

The protein belongs to the UppP family.

The protein resides in the cell inner membrane. It catalyses the reaction di-trans,octa-cis-undecaprenyl diphosphate + H2O = di-trans,octa-cis-undecaprenyl phosphate + phosphate + H(+). Its function is as follows. Catalyzes the dephosphorylation of undecaprenyl diphosphate (UPP). Confers resistance to bacitracin. This Stutzerimonas stutzeri (strain A1501) (Pseudomonas stutzeri) protein is Undecaprenyl-diphosphatase 2.